The chain runs to 748 residues: Translation factor GUF1 homolog 1, mitochondrial (748 aa).

Residues methionine 1–tryptophan 29 constitute a mitochondrion transit peptide. Residues serine 94–threonine 276 form the tr-type G domain. Residues alanine 103–threonine 110, aspartate 167–histidine 171, and threonine 221–aspartate 224 contribute to the GTP site.

Belongs to the TRAFAC class translation factor GTPase superfamily. Classic translation factor GTPase family. LepA subfamily.

The protein localises to the mitochondrion inner membrane. The enzyme catalyses GTP + H2O = GDP + phosphate + H(+). Functionally, promotes mitochondrial protein synthesis. May act as a fidelity factor of the translation reaction, by catalyzing a one-codon backward translocation of tRNAs on improperly translocated ribosomes. Binds to mitochondrial ribosomes in a GTP-dependent manner. This Trypanosoma cruzi (strain CL Brener) protein is Translation factor GUF1 homolog 1, mitochondrial.